Consider the following 465-residue polypeptide: Fumarate hydratase class II (465 aa).

Residues 100–102 (SGT), 131–134 (HPND), 141–143 (SSN), and Thr-189 each bind substrate. The active-site Proton donor/acceptor is His-190. The active site involves Ser-320. Substrate is bound by residues Ser-321 and 326–328 (KVN).

It belongs to the class-II fumarase/aspartase family. Fumarase subfamily. Homotetramer.

The protein resides in the cytoplasm. The catalysed reaction is (S)-malate = fumarate + H2O. Its pathway is carbohydrate metabolism; tricarboxylic acid cycle; (S)-malate from fumarate: step 1/1. Involved in the TCA cycle. Catalyzes the stereospecific interconversion of fumarate to L-malate. The protein is Fumarate hydratase class II of Mesorhizobium japonicum (strain LMG 29417 / CECT 9101 / MAFF 303099) (Mesorhizobium loti (strain MAFF 303099)).